The chain runs to 432 residues: Diaminopimelate decarboxylase (432 aa).

Residue lysine 66 is modified to N6-(pyridoxal phosphate)lysine. Pyridoxal 5'-phosphate is bound by residues glycine 248 and 290 to 293 (EPGR). Residues arginine 293, arginine 330, and tyrosine 334 each coordinate substrate. Cysteine 361 (proton donor) is an active-site residue. 2 residues coordinate substrate: glutamate 362 and tyrosine 390. Tyrosine 390 contacts pyridoxal 5'-phosphate.

This sequence belongs to the Orn/Lys/Arg decarboxylase class-II family. LysA subfamily. As to quaternary structure, homodimer. Pyridoxal 5'-phosphate is required as a cofactor.

The catalysed reaction is meso-2,6-diaminopimelate + H(+) = L-lysine + CO2. Its pathway is amino-acid biosynthesis; L-lysine biosynthesis via DAP pathway; L-lysine from DL-2,6-diaminopimelate: step 1/1. Functionally, specifically catalyzes the decarboxylation of meso-diaminopimelate (meso-DAP) to L-lysine. In Bacillus methanolicus, this protein is Diaminopimelate decarboxylase.